The sequence spans 265 residues: Undecaprenyl-diphosphatase 1 (265 aa).

A run of 7 helical transmembrane segments spans residues 4–24, 42–62, 84–104, 108–128, 184–204, 217–237, and 245–265; these read IITAFILGIVEGLAEFLPISS, AKTFEIVIQLGAILAIAILYH, FHVFLGVFPAVVAGLLLHDII, LFQPYTVVIGLVAGAILMIFA, SEFSFLIALPVMVGATGLDLL, MFAVGFITSFIVAMLAVVTFL, and LKPFAYYRILLAILFTVFVLL.

It belongs to the UppP family.

It localises to the cell membrane. The catalysed reaction is di-trans,octa-cis-undecaprenyl diphosphate + H2O = di-trans,octa-cis-undecaprenyl phosphate + phosphate + H(+). Catalyzes the dephosphorylation of undecaprenyl diphosphate (UPP). Confers resistance to bacitracin. This is Undecaprenyl-diphosphatase 1 from Bacillus thuringiensis subsp. konkukian (strain 97-27).